Reading from the N-terminus, the 89-residue chain is Small membrane A-kinase anchor protein (89 aa).

The tract at residues 1–29 (MGCMKSKRRDPTQNSDSSEKVDGKPGKHG) is disordered. G2 carries N-myristoyl glycine lipidation. A compositionally biased stretch (basic and acidic residues) spans 17-29 (SSEKVDGKPGKHG).

This sequence belongs to the small membrane AKAP family. May be palmitoylated at Cys-3.

Its subcellular location is the cell membrane. In terms of biological role, binds to type I regulatory subunits of protein kinase A and may anchor/target them to the plasma membrane. This Danio rerio (Zebrafish) protein is Small membrane A-kinase anchor protein.